The primary structure comprises 752 residues: Protein SEY1 homolog 1 (752 aa).

Over 1–674 (MIKNQGDRYH…QKHKQDFLQN (674 aa)) the chain is Cytoplasmic. The GB1/RHD3-type G domain maps to 40 to 265 (GKKYNIVSII…YEKNVRWSDM (226 aa)). Residue 50–57 (GSQSTGKS) coordinates GTP. A coiled-coil region spans residues 445–465 (NQLKSFVEAQLASFKQQLDNI). A helical transmembrane segment spans residues 675–695 (IPKPFWFLLLFFMYDDVLRWM). The Lumenal segment spans residues 696-698 (GNP). A helical transmembrane segment spans residues 699 to 719 (LFLYPILIILCFIGFCIAIGL). The Cytoplasmic segment spans residues 720–752 (HSLPKLAFQTVFRTINQALLPLIFGGISKLKTS).

It belongs to the TRAFAC class dynamin-like GTPase superfamily. GB1/RHD3 GTPase family. RHD3 subfamily.

The protein localises to the endoplasmic reticulum membrane. In terms of biological role, probable GTP-binding protein that may be involved in cell development. The polypeptide is Protein SEY1 homolog 1 (Paramecium tetraurelia).